We begin with the raw amino-acid sequence, 302 residues long: S-crystallin SL4 (302 aa).

3 repeat units span residues G45–D54, G55–D64, and G65–D74. Residues G45–D84 are 4 X approximate tandem repeats of G-G-Y-[AYP]-V-[QK]-[SG]-R-G-D. Short sequence motifs (cell attachment site) lie at residues R52–D54, R62–D64, and R72–D74. Residues P68 to R92 form a disordered region. A 4; approximate repeat occupies T75 to D84. Positions R113–D115 match the Cell attachment site motif. Residues S118–H205 form a disordered region. 2 stretches are compositionally biased toward basic and acidic residues: residues R129 to S166 and A177 to I192. In terms of domain architecture, GST C-terminal spans G183–F302.

This sequence belongs to the GST superfamily.

In terms of biological role, S-crystallins are structural components of squids and octopi eye lens. The sequence is that of S-crystallin SL4 from Nototodarus sloanii (Wellington flying squid).